Reading from the N-terminus, the 218-residue chain is Glutathione S-transferase Mu 1 (218 aa).

Residues Pro2 to Gly88 enclose the GST N-terminal domain. Residue Tyr7 to Trp8 participates in glutathione binding. Position 34 is a phosphothreonine (Thr34). Glutathione contacts are provided by residues Arg43–Trp46, Lys50, and Asn59–Leu60. Phosphoserine is present on Ser67. Gln72–Ser73 contributes to the glutathione binding site. Residues Thr90–Ile208 enclose the GST C-terminal domain. Tyr116 lines the substrate pocket. Ser210 is modified (phosphoserine).

As to quaternary structure, homodimer.

The protein resides in the cytoplasm. The enzyme catalyses RX + glutathione = an S-substituted glutathione + a halide anion + H(+). It carries out the reaction prostaglandin A2 + glutathione = prostaglandin A2-S-(R)-glutathione. It catalyses the reaction prostaglandin J2 + glutathione = prostaglandin J2-S-(R)-glutathione. The catalysed reaction is prostaglandin J2 + glutathione = prostaglandin J2-S-(S)-glutathione. The enzyme catalyses prostaglandin A2 + glutathione = prostaglandin A2-S-(S)-glutathione. It carries out the reaction 11(S)-hydroxy-14(S),15(S)-epoxy-(5Z,8Z,12E)-eicosatrienoate + glutathione = (11S,15S)-dihydroxy-14(R)-S-glutathionyl-(5Z,8Z,12E)-eicosatrienoate. In terms of biological role, conjugation of reduced glutathione to a wide number of exogenous and endogenous hydrophobic electrophiles. Involved in the formation of glutathione conjugates of both prostaglandin A2 (PGA2) and prostaglandin J2 (PGJ2). Participates in the formation of novel hepoxilin regioisomers. This chain is Glutathione S-transferase Mu 1, found in Mus musculus (Mouse).